Reading from the N-terminus, the 556-residue chain is Dihydroxy-acid dehydratase (556 aa).

Mg(2+) is bound at residue Asp78. Cys119 serves as a coordination point for [2Fe-2S] cluster. Residues Asp120 and Lys121 each coordinate Mg(2+). Lys121 carries the post-translational modification N6-carboxylysine. [2Fe-2S] cluster is bound at residue Cys195. Residue Glu446 participates in Mg(2+) binding. Ser472 functions as the Proton acceptor in the catalytic mechanism.

Belongs to the IlvD/Edd family. As to quaternary structure, homodimer. The cofactor is [2Fe-2S] cluster. It depends on Mg(2+) as a cofactor.

It carries out the reaction (2R)-2,3-dihydroxy-3-methylbutanoate = 3-methyl-2-oxobutanoate + H2O. The catalysed reaction is (2R,3R)-2,3-dihydroxy-3-methylpentanoate = (S)-3-methyl-2-oxopentanoate + H2O. It participates in amino-acid biosynthesis; L-isoleucine biosynthesis; L-isoleucine from 2-oxobutanoate: step 3/4. The protein operates within amino-acid biosynthesis; L-valine biosynthesis; L-valine from pyruvate: step 3/4. Functionally, functions in the biosynthesis of branched-chain amino acids. Catalyzes the dehydration of (2R,3R)-2,3-dihydroxy-3-methylpentanoate (2,3-dihydroxy-3-methylvalerate) into 2-oxo-3-methylpentanoate (2-oxo-3-methylvalerate) and of (2R)-2,3-dihydroxy-3-methylbutanoate (2,3-dihydroxyisovalerate) into 2-oxo-3-methylbutanoate (2-oxoisovalerate), the penultimate precursor to L-isoleucine and L-valine, respectively. This is Dihydroxy-acid dehydratase from Desulfatibacillum aliphaticivorans.